We begin with the raw amino-acid sequence, 491 residues long: Glutamyl-tRNA(Gln) amidotransferase subunit A (491 aa).

Residues Lys76 and Ser154 each act as charge relay system in the active site. The active-site Acyl-ester intermediate is the Ser178.

This sequence belongs to the amidase family. GatA subfamily. Heterotrimer of A, B and C subunits.

The catalysed reaction is L-glutamyl-tRNA(Gln) + L-glutamine + ATP + H2O = L-glutaminyl-tRNA(Gln) + L-glutamate + ADP + phosphate + H(+). In terms of biological role, allows the formation of correctly charged Gln-tRNA(Gln) through the transamidation of misacylated Glu-tRNA(Gln) in organisms which lack glutaminyl-tRNA synthetase. The reaction takes place in the presence of glutamine and ATP through an activated gamma-phospho-Glu-tRNA(Gln). This Cereibacter sphaeroides (strain ATCC 17023 / DSM 158 / JCM 6121 / CCUG 31486 / LMG 2827 / NBRC 12203 / NCIMB 8253 / ATH 2.4.1.) (Rhodobacter sphaeroides) protein is Glutamyl-tRNA(Gln) amidotransferase subunit A.